The sequence spans 368 residues: ATP-dependent (S)-NAD(P)H-hydrate dehydratase (368 aa).

Residues 3 to 359 (SPSKKLLANV…DEVHGSFLDL (357 aa)) form the YjeF C-terminal domain. (6S)-NADPHX contacts are provided by residues G120 and 173 to 179 (NVVEFAR). Residues 217 to 221 (KGPHD) and 236 to 245 (GGLKRSGGQG) each bind ATP. Residue D246 participates in (6S)-NADPHX binding.

This sequence belongs to the NnrD/CARKD family. Mg(2+) is required as a cofactor.

It is found in the cytoplasm. The enzyme catalyses (6S)-NADHX + ATP = ADP + phosphate + NADH + H(+). It carries out the reaction (6S)-NADPHX + ATP = ADP + phosphate + NADPH + H(+). Its function is as follows. Catalyzes the dehydration of the S-form of NAD(P)HX at the expense of ATP, which is converted to ADP. Together with NAD(P)HX epimerase, which catalyzes the epimerization of the S- and R-forms, the enzyme allows the repair of both epimers of NAD(P)HX, a damaged form of NAD(P)H that is a result of enzymatic or heat-dependent hydration. The sequence is that of ATP-dependent (S)-NAD(P)H-hydrate dehydratase from Ajellomyces capsulatus (strain G186AR / H82 / ATCC MYA-2454 / RMSCC 2432) (Darling's disease fungus).